Reading from the N-terminus, the 350-residue chain is Mannonate dehydratase (350 aa).

The protein belongs to the mannonate dehydratase family. Fe(2+) serves as cofactor. Requires Mn(2+) as cofactor.

The catalysed reaction is D-mannonate = 2-dehydro-3-deoxy-D-gluconate + H2O. It functions in the pathway carbohydrate metabolism; pentose and glucuronate interconversion. Its function is as follows. Catalyzes the dehydration of D-mannonate. The chain is Mannonate dehydratase from Clostridium perfringens (strain 13 / Type A).